The primary structure comprises 401 residues: Calcium-responsive transcription coactivator (401 aa).

An N-terminal auto-inhibitory domain; necessary for interaction with SMARCA4/BRG1 region spans residues 1 to 148 (MSVAFASARP…TLPTTSMSMS (148 aa)). The short motif at 50–53 (YQQI) is the SH2-binding element. Disordered regions lie at residues 72 to 171 (QSLL…VPMQ) and 214 to 401 (TRAR…NYQQ). The segment covering 85–106 (LGPGALSQSGSSQGLHPQGSLS) has biased composition (low complexity). Over residues 128–137 (NHVSMQQTAQ) the composition is skewed to polar residues. Residues 138-149 (STLPTTSMSMSG) show a composition bias toward low complexity. A methionine-rich intra-molecular domain region spans residues 149–237 (GSGHGTGPGY…GGSMMGQRPM (89 aa)). Residues 251 to 322 (YLGQEEYYSE…SQYSQQQAGY (72 aa)) are MFD domain. Composition is skewed to polar residues over residues 260-276 (EQYS…SQQY) and 285-294 (AYQQSSYTEQ). Residues 295–304 (SYDRSFEDPT) show a composition bias toward basic and acidic residues. The span at 310–374 (GGNSQYSQQQ…QGQGQQYGSY (65 aa)) shows a compositional bias: low complexity. Residues 339-401 (NQQSYPGQQQ…EQGQYGNYQQ (63 aa)) form a necessary for nuclear localization region. An SH2-binding motif is present at residues 358–361 (SQYS). Residues 375–387 (RTSQTGPSAQQQR) show a composition bias toward polar residues. An SH3-binding motif is present at residues 376–384 (TSQTGPSAQ). Over residues 389–401 (YGYEQGQYGNYQQ) the composition is skewed to low complexity. A necessary for interaction with CREBBP and for the recruitment of CREBBP to the nuclear bodies region spans residues 392-401 (EQGQYGNYQQ). The short motif at 396–399 (YGNY) is the SH2-binding element.

This sequence belongs to the SS18 family. In terms of assembly, homodimer. Dimerization may be necessary for its function in neuronal dendritic development. Interacts (via C-terminus) with CREBBP (via N-terminus), EP300 and SMARCA4/BRG1. Interacts with the nBAF complex. Association with CREBBP facilitates transcription while the association with SMARCA4/BRG1 suppresses CREST-mediated transcription in resting neurons. In terms of tissue distribution, brain (at protein level). Also found in the heart, liver, kidney and testis.

The protein resides in the nucleus. Its subcellular location is the chromosome. It localises to the centromere. The protein localises to the kinetochore. In terms of biological role, transcriptional activator which is required for calcium-dependent dendritic growth and branching in cortical neurons. Recruits CREB-binding protein (CREBBP) to nuclear bodies. Component of the CREST-BRG1 complex, a multiprotein complex that regulates promoter activation by orchestrating a calcium-dependent release of a repressor complex and a recruitment of an activator complex. In resting neurons, transcription of the c-FOS promoter is inhibited by BRG1-dependent recruitment of a phospho-RB1-HDAC1 repressor complex. Upon calcium influx, RB1 is dephosphorylated by calcineurin, which leads to release of the repressor complex. At the same time, there is increased recruitment of CREBBP to the promoter by a CREST-dependent mechanism, which leads to transcriptional activation. The CREST-BRG1 complex also binds to the NR2B promoter, and activity-dependent induction of NR2B expression involves a release of HDAC1 and recruitment of CREBBP. The polypeptide is Calcium-responsive transcription coactivator (Ss18l1) (Rattus norvegicus (Rat)).